The primary structure comprises 61 residues: Large ribosomal subunit protein uL30 (61 aa).

The protein belongs to the universal ribosomal protein uL30 family. As to quaternary structure, part of the 50S ribosomal subunit.

This Rhizorhabdus wittichii (strain DSM 6014 / CCUG 31198 / JCM 15750 / NBRC 105917 / EY 4224 / RW1) (Sphingomonas wittichii) protein is Large ribosomal subunit protein uL30.